Reading from the N-terminus, the 614-residue chain is Glucosidase 2 subunit beta (614 aa).

A signal peptide spans M1–A20. A glycan (N-linked (GlcNAc...) asparagine) is linked at N115. 3 stretches are compositionally biased toward basic and acidic residues: residues E194–S222, Q231–E272, and T324–E351. The disordered stretch occupies residues E194–D396. Residues T352–E364 show a composition bias toward acidic residues. Residues S372–D382 are compositionally biased toward basic and acidic residues. Residues D383–D396 are compositionally biased toward acidic residues. In terms of domain architecture, MRH spans D497–E592. Disulfide bonds link C499–C512, C549–C578, and C563–C590.

Heterodimer of a catalytic alpha subunit and a beta subunit.

It localises to the endoplasmic reticulum. Its pathway is glycan metabolism; N-glycan metabolism. Its function is as follows. Regulatory subunit of glucosidase II. May be required for defense response elicited by pathogen-associated molecular patterns (PAMPs). This is Glucosidase 2 subunit beta from Oryza sativa subsp. indica (Rice).